The chain runs to 1332 residues: DNA-directed RNA polymerase subunit beta' (1332 aa).

Residues cysteine 60, cysteine 62, cysteine 75, and cysteine 78 each contribute to the Zn(2+) site. Positions 535, 537, and 539 each coordinate Mg(2+). Positions 894, 977, 984, and 987 each coordinate Zn(2+).

The protein belongs to the RNA polymerase beta' chain family. In terms of assembly, the RNAP catalytic core consists of 2 alpha, 1 beta, 1 beta' and 1 omega subunit. When a sigma factor is associated with the core the holoenzyme is formed, which can initiate transcription. Requires Mg(2+) as cofactor. Zn(2+) is required as a cofactor.

It catalyses the reaction RNA(n) + a ribonucleoside 5'-triphosphate = RNA(n+1) + diphosphate. Functionally, DNA-dependent RNA polymerase catalyzes the transcription of DNA into RNA using the four ribonucleoside triphosphates as substrates. The polypeptide is DNA-directed RNA polymerase subunit beta' (Corynebacterium kroppenstedtii (strain DSM 44385 / JCM 11950 / CIP 105744 / CCUG 35717)).